The following is a 248-amino-acid chain: Cell division protein ZapD (248 aa).

This sequence belongs to the ZapD family. In terms of assembly, interacts with FtsZ.

It is found in the cytoplasm. Functionally, cell division factor that enhances FtsZ-ring assembly. Directly interacts with FtsZ and promotes bundling of FtsZ protofilaments, with a reduction in FtsZ GTPase activity. In Aliivibrio fischeri (strain ATCC 700601 / ES114) (Vibrio fischeri), this protein is Cell division protein ZapD.